A 277-amino-acid chain; its full sequence is Shikimate dehydrogenase (NADP(+)) (277 aa).

Residues 15–17 (SLS) and Thr62 contribute to the shikimate site. The active-site Proton acceptor is the Lys66. 2 residues coordinate shikimate: Asn87 and Asp102. Residues 127-131 (GAGGA), 151-156 (NRTVDK), and Ile219 each bind NADP(+). Tyr221 is a binding site for shikimate. Gly242 provides a ligand contact to NADP(+).

The protein belongs to the shikimate dehydrogenase family. In terms of assembly, homodimer.

It catalyses the reaction shikimate + NADP(+) = 3-dehydroshikimate + NADPH + H(+). It functions in the pathway metabolic intermediate biosynthesis; chorismate biosynthesis; chorismate from D-erythrose 4-phosphate and phosphoenolpyruvate: step 4/7. Involved in the biosynthesis of the chorismate, which leads to the biosynthesis of aromatic amino acids. Catalyzes the reversible NADPH linked reduction of 3-dehydroshikimate (DHSA) to yield shikimate (SA). This Bacillus cereus (strain AH820) protein is Shikimate dehydrogenase (NADP(+)).